We begin with the raw amino-acid sequence, 314 residues long: Homoserine O-acetyltransferase (314 aa).

The Acyl-thioester intermediate role is filled by Cys142. Substrate contacts are provided by Lys163 and Ser192. The active-site Proton acceptor is His235. Residue Glu237 is part of the active site. Arg249 contacts substrate.

This sequence belongs to the MetA family.

The protein resides in the cytoplasm. It catalyses the reaction L-homoserine + acetyl-CoA = O-acetyl-L-homoserine + CoA. Its pathway is amino-acid biosynthesis; L-methionine biosynthesis via de novo pathway; O-acetyl-L-homoserine from L-homoserine: step 1/1. Its function is as follows. Transfers an acetyl group from acetyl-CoA to L-homoserine, forming acetyl-L-homoserine. In Streptococcus mutans serotype c (strain ATCC 700610 / UA159), this protein is Homoserine O-acetyltransferase.